Here is a 508-residue protein sequence, read N- to C-terminus: Transposase (508 aa).

The HTH IS21-type domain occupies 3-65 (LLSVIRRWHF…PFADRLSAWL (63 aa)). One can recognise an Integrase catalytic domain in the interval 124 to 299 (LAFEPGEAFQ…TIADIWVEEV (176 aa)).

It belongs to the transposase IS21/IS408/IS1162 family.

Functionally, required for the transposition of the insertion element. The sequence is that of Transposase (nmoT) from Aminobacter aminovorans (Chelatobacter heintzii).